The following is a 478-amino-acid chain: Proline--tRNA ligase (478 aa).

It belongs to the class-II aminoacyl-tRNA synthetase family. ProS type 3 subfamily. Homodimer.

The protein resides in the cytoplasm. It carries out the reaction tRNA(Pro) + L-proline + ATP = L-prolyl-tRNA(Pro) + AMP + diphosphate. Functionally, catalyzes the attachment of proline to tRNA(Pro) in a two-step reaction: proline is first activated by ATP to form Pro-AMP and then transferred to the acceptor end of tRNA(Pro). The protein is Proline--tRNA ligase of Ignicoccus hospitalis (strain KIN4/I / DSM 18386 / JCM 14125).